The chain runs to 223 residues: Germin-like protein 1-3 (223 aa).

The N-terminal stretch at 1–22 (MAKLILATFAVVFMALAATSLA) is a signal peptide. A disulfide bridge links Cys32 with Cys50. A glycan (N-linked (GlcNAc...) asparagine) is linked at Asn55. A Cupin type-1 domain is found at 64 to 212 (DGLMKAGNTG…AFQVDGGMVE (149 aa)). Mn(2+)-binding residues include His112, His114, Glu119, and His158.

The protein belongs to the germin family. Oligomer (believed to be a pentamer but probably hexamer).

Its subcellular location is the secreted. The protein localises to the extracellular space. It is found in the apoplast. May play a role in plant defense. Probably has no oxalate oxidase activity even if the active site is conserved. This chain is Germin-like protein 1-3 (GER8), found in Oryza sativa subsp. japonica (Rice).